The sequence spans 379 residues: Programmed cell death protein 2-like (379 aa).

The chain is Programmed cell death protein 2-like (PDCD2L) from Gallus gallus (Chicken).